Here is a 454-residue protein sequence, read N- to C-terminus: UDP-N-acetylmuramate--L-alanine ligase (454 aa).

An ATP-binding site is contributed by Gly109 to Thr115.

The protein belongs to the MurCDEF family.

The protein resides in the cytoplasm. The enzyme catalyses UDP-N-acetyl-alpha-D-muramate + L-alanine + ATP = UDP-N-acetyl-alpha-D-muramoyl-L-alanine + ADP + phosphate + H(+). The protein operates within cell wall biogenesis; peptidoglycan biosynthesis. Cell wall formation. This Protochlamydia amoebophila (strain UWE25) protein is UDP-N-acetylmuramate--L-alanine ligase.